Here is a 158-residue protein sequence, read N- to C-terminus: Protein Smg homolog (158 aa).

It belongs to the Smg family.

This chain is Protein Smg homolog, found in Herminiimonas arsenicoxydans.